The primary structure comprises 950 residues: MKLSELFNPDEFAARHLSFGDEAALLAAVGEKSMDDFVGNTVPQSIRMPSELDLPEALTEADALAKLKGIASKNMINKSYIGLGYYPTRVPNVILRNVLENPGWYTAYTPYQAEIAQGRLEALLNFQQVCIDLTGFPVAGASLLDEATAAAEAMAMAHRVGKVKSERFFVDARVYPQTLDVMKTRAKYFGFELVVGDFAQADEGEYFGALFQYVGKDGDVQDLQDVIGRLKAKGTIVAVSADIMSLVLLKSPAELGADIALGNTQRFGVPMGFGGPHAAYFAFKDEFKRSAPGRIIGVSKDASGKPALRMALSTREQHIRREKATSNICTAQALLANLAGMYAVYHGPEGVKRIANRIHALASAFADALVSDGINVVHKVFFDTVTVDFGNKEKADQVFAAALESGYNLRRVNDTQVAAAFHETSACEDLVDLYRAFTGKDTFAFADDVKGRLNAELLRQDDILQHPVFNRYHTEHEMLRYLKKLEDRDLAMNRSMISLGSCTMKLNATAEMLPITWAEFSDIHPYAPEAQTAGYRELLADMENSLKSITGFDAISFQPNSGAQGEYSGMLAIRRYQEAQGEAQRNICLIPKSAHGTNPATAAMLGLKVVVVDTDEHGNVNIDDLKAKAEQHRDALSAIMITYPSTHGVYEEGIRDICRIVHENGGQVYMDGANLNAQIGIMQPAEVGADVLHMNLHKTFCIPHGGGGPGMGPIGLKAHLAPFAPGHALTDTHSASADQTAVAAAAFGSASILPITWMYLTMMGKQGMEQATRWALLNANYVAKRLSEDYPILYTGKNGRVAHECIVDLRPLKAESGITETDIAKRLMDYGFHAPTVSFPVAGTLMIEPTESESKAELDRFIAALKQIKQEVLKVGRGEWPKEDNPLVNAPHTASDVTGEWAHPYSREEAVFPLPFVREHKFWPSVNRVDDVYGDRNLVCSCPPMENYED.

Lysine 698 carries the post-translational modification N6-(pyridoxal phosphate)lysine.

The protein belongs to the GcvP family. As to quaternary structure, the glycine cleavage system is composed of four proteins: P, T, L and H. The cofactor is pyridoxal 5'-phosphate.

It carries out the reaction N(6)-[(R)-lipoyl]-L-lysyl-[glycine-cleavage complex H protein] + glycine + H(+) = N(6)-[(R)-S(8)-aminomethyldihydrolipoyl]-L-lysyl-[glycine-cleavage complex H protein] + CO2. Its function is as follows. The glycine cleavage system catalyzes the degradation of glycine. The P protein binds the alpha-amino group of glycine through its pyridoxal phosphate cofactor; CO(2) is released and the remaining methylamine moiety is then transferred to the lipoamide cofactor of the H protein. This Neisseria meningitidis serogroup C (strain 053442) protein is Glycine dehydrogenase (decarboxylating).